The sequence spans 314 residues: 4-hydroxy-3-methylbut-2-enyl diphosphate reductase (314 aa).

Cys-12 provides a ligand contact to [4Fe-4S] cluster. (2E)-4-hydroxy-3-methylbut-2-enyl diphosphate contacts are provided by His-41 and His-74. Positions 41 and 74 each coordinate dimethylallyl diphosphate. Residues His-41 and His-74 each coordinate isopentenyl diphosphate. Cys-96 contacts [4Fe-4S] cluster. His-124 contributes to the (2E)-4-hydroxy-3-methylbut-2-enyl diphosphate binding site. Position 124 (His-124) interacts with dimethylallyl diphosphate. His-124 contributes to the isopentenyl diphosphate binding site. Glu-126 functions as the Proton donor in the catalytic mechanism. Thr-167 is a binding site for (2E)-4-hydroxy-3-methylbut-2-enyl diphosphate. Cys-197 contributes to the [4Fe-4S] cluster binding site. (2E)-4-hydroxy-3-methylbut-2-enyl diphosphate contacts are provided by Ser-225, Ser-226, Asn-227, and Ser-269. Positions 225, 226, 227, and 269 each coordinate dimethylallyl diphosphate. Ser-225, Ser-226, Asn-227, and Ser-269 together coordinate isopentenyl diphosphate.

Belongs to the IspH family. It depends on [4Fe-4S] cluster as a cofactor.

The enzyme catalyses isopentenyl diphosphate + 2 oxidized [2Fe-2S]-[ferredoxin] + H2O = (2E)-4-hydroxy-3-methylbut-2-enyl diphosphate + 2 reduced [2Fe-2S]-[ferredoxin] + 2 H(+). The catalysed reaction is dimethylallyl diphosphate + 2 oxidized [2Fe-2S]-[ferredoxin] + H2O = (2E)-4-hydroxy-3-methylbut-2-enyl diphosphate + 2 reduced [2Fe-2S]-[ferredoxin] + 2 H(+). The protein operates within isoprenoid biosynthesis; dimethylallyl diphosphate biosynthesis; dimethylallyl diphosphate from (2E)-4-hydroxy-3-methylbutenyl diphosphate: step 1/1. Its pathway is isoprenoid biosynthesis; isopentenyl diphosphate biosynthesis via DXP pathway; isopentenyl diphosphate from 1-deoxy-D-xylulose 5-phosphate: step 6/6. In terms of biological role, catalyzes the conversion of 1-hydroxy-2-methyl-2-(E)-butenyl 4-diphosphate (HMBPP) into a mixture of isopentenyl diphosphate (IPP) and dimethylallyl diphosphate (DMAPP). Acts in the terminal step of the DOXP/MEP pathway for isoprenoid precursor biosynthesis. This chain is 4-hydroxy-3-methylbut-2-enyl diphosphate reductase, found in Aliivibrio fischeri (strain MJ11) (Vibrio fischeri).